A 638-amino-acid polypeptide reads, in one-letter code: Sorting nexin-41 (638 aa).

Residues 1–14 (MDSDTSPNPFASSP) show a composition bias toward low complexity. Positions 1–69 (MDSDTSPNPF…MGATVPGPKP (69 aa)) are disordered. Pro residues predominate over residues 15 to 30 (PSSPSPRPSLPPPVPR). The 118-residue stretch at 84–201 (GEQVHIVDAL…HRFLEEDVSW (118 aa)) folds into the PX domain. A 1,2-diacyl-sn-glycero-3-phospho-(1D-myo-inositol-3-phosphate)-binding residues include R118, S120, K144, and R168. 3 disordered regions span residues 215–239 (KNPL…SEAP), 408–432 (LERG…RERA), and 545–638 (PHPN…LGPL). Residues 225–239 (PTFQPTTPTSPSEAP) show a composition bias toward low complexity. The segment covering 423-432 (EAARDERERA) has biased composition (basic and acidic residues). Over residues 552–562 (QTQTQVQSQQS) the composition is skewed to low complexity. Residues 585–601 (MKNEIERVEIEIADKPL) are compositionally biased toward basic and acidic residues.

The protein belongs to the sorting nexin family.

Its subcellular location is the endosome membrane. It localises to the endomembrane system. Its function is as follows. May be required for cytoplasm to vacuole transport (Cvt) and pexophagy. The chain is Sorting nexin-41 (SNX41) from Cryptococcus neoformans var. neoformans serotype D (strain JEC21 / ATCC MYA-565) (Filobasidiella neoformans).